Reading from the N-terminus, the 327-residue chain is Ubiquinone biosynthesis O-methyltransferase, mitochondrial (327 aa).

Residues R79, G142, D165, and F210 each contribute to the S-adenosyl-L-methionine site. Mg(2+) is bound by residues E211, E214, and H215.

This sequence belongs to the class I-like SAM-binding methyltransferase superfamily. UbiG/COQ3 family. Component of a multi-subunit COQ enzyme complex, composed of at least COQ3, COQ4, COQ5, COQ6, COQ7 and COQ9. Mg(2+) is required as a cofactor.

Its subcellular location is the mitochondrion inner membrane. It catalyses the reaction a 3,4-dihydroxy-5-(all-trans-polyprenyl)benzoate + S-adenosyl-L-methionine = a 4-hydroxy-3-methoxy-5-(all-trans-polyprenyl)benzoate + S-adenosyl-L-homocysteine + H(+). The catalysed reaction is a 3-demethylubiquinone + S-adenosyl-L-methionine = a ubiquinone + S-adenosyl-L-homocysteine. The enzyme catalyses a 3-demethylubiquinol + S-adenosyl-L-methionine = a ubiquinol + S-adenosyl-L-homocysteine + H(+). It participates in cofactor biosynthesis; ubiquinone biosynthesis. In terms of biological role, O-methyltransferase required for two non-consecutive steps during ubiquinone biosynthesis. Catalyzes the 2 O-methylation of 3,4-dihydroxy-5-(all-trans-polyprenyl)benzoic acid into 4-hydroxy-3-methoxy-5-(all-trans-polyprenyl)benzoic acid. Also catalyzes the last step of ubiquinone biosynthesis by mediating methylation of 3-demethylubiquinone into ubiquinone. Also able to mediate the methylation of 3-demethylubiquinol into ubiquinol. This is Ubiquinone biosynthesis O-methyltransferase, mitochondrial from Candida albicans (Yeast).